Here is a 734-residue protein sequence, read N- to C-terminus: Photosystem I P700 chlorophyll a apoprotein A2 (734 aa).

A run of 8 helical transmembrane segments spans residues 46–69 (IFAS…FHVA), 135–158 (LYTG…LHLQ), 175–199 (LNHH…HVAI), 273–291 (IAHH…GHMY), 330–353 (IHFQ…QHMY), 369–395 (AALY…IFFI), 417–439 (AIKS…LYVH), and 517–535 (FLVH…LILV). [4Fe-4S] cluster-binding residues include C559 and C568. A run of 2 helical transmembrane segments spans residues 575 to 596 (AFYL…YWHW) and 643 to 665 (LSVW…MFLI). 3 residues coordinate chlorophyll a: H654, M662, and Y670. W671 lines the phylloquinone pocket. The chain crosses the membrane as a helical span at residues 707 to 727 (LVGLAHFSVGYIFTYAAFLIA).

This sequence belongs to the PsaA/PsaB family. The PsaA/B heterodimer binds the P700 chlorophyll special pair and subsequent electron acceptors. PSI consists of a core antenna complex that captures photons, and an electron transfer chain that converts photonic excitation into a charge separation. The eukaryotic PSI reaction center is composed of at least 11 subunits. The cofactor is P700 is a chlorophyll a/chlorophyll a' dimer, A0 is one or more chlorophyll a, A1 is one or both phylloquinones and FX is a shared 4Fe-4S iron-sulfur center..

It is found in the plastid. Its subcellular location is the chloroplast thylakoid membrane. The catalysed reaction is reduced [plastocyanin] + hnu + oxidized [2Fe-2S]-[ferredoxin] = oxidized [plastocyanin] + reduced [2Fe-2S]-[ferredoxin]. Its function is as follows. PsaA and PsaB bind P700, the primary electron donor of photosystem I (PSI), as well as the electron acceptors A0, A1 and FX. PSI is a plastocyanin-ferredoxin oxidoreductase, converting photonic excitation into a charge separation, which transfers an electron from the donor P700 chlorophyll pair to the spectroscopically characterized acceptors A0, A1, FX, FA and FB in turn. Oxidized P700 is reduced on the lumenal side of the thylakoid membrane by plastocyanin. This chain is Photosystem I P700 chlorophyll a apoprotein A2, found in Illicium oligandrum (Star anise).